Consider the following 322-residue polypeptide: MPPPLSPRARTLVGQVKRNVQFHVELHQYNTNPTPHTMADIQFDSALDLLRRLNPRDTKQNLQAITSIVPDLTEDLLSSVDQPLEIRRCPKTNRDYLLCDYNRDGDSYRSPWSNEFDPPLEDGTVPSERVRKLEVAANEAFDVYRELYYEGGVGSVYFWDLDDGFAGVILLKKGVTPGAKSSGEWDSIHVFEATDRARMSHYKLTSTVILHLANENEALGEMDLSGNMTRQMEVDLPVESDASHVANVGRLVEDMELKMRNLLQEVYFGKAKDVVGELRSKPLLCHGRTKAMDADKNTGLAPLSETNKEKAAHLEMIRSMQR.

It belongs to the F-actin-capping protein beta subunit family. In terms of assembly, component of the F-actin capping complex, composed of a heterodimer of an alpha and a beta subunit.

The protein resides in the cytoplasm. Its subcellular location is the cytoskeleton. It is found in the actin patch. Functionally, F-actin-capping proteins bind in a Ca(2+)-independent manner to the fast growing ends of actin filaments (barbed end) thereby blocking the exchange of subunits at these ends. Unlike other capping proteins (such as gelsolin and severin), these proteins do not sever actin filaments. This Aspergillus fumigatus (strain ATCC MYA-4609 / CBS 101355 / FGSC A1100 / Af293) (Neosartorya fumigata) protein is F-actin-capping protein subunit beta (cap2).